Here is a 160-residue protein sequence, read N- to C-terminus: MNIIQSGITAENSSIAIIIARFNEFINKNLLLGALDTLKRIGQVHEENILKIYVPGTYEIPTIASYIAKSGKYDAIIAIGTIIKGQTDHFKYIANDTSSSLSRISAQYFLPITLGILTTKNIEQSIERSGTKMGNKGSDAALAALEMINVMKKLKKVIYY.

Residues phenylalanine 22, 57 to 59 (TYE), and 81 to 83 (TII) contribute to the 5-amino-6-(D-ribitylamino)uracil site. 86-87 (QT) serves as a coordination point for (2S)-2-hydroxy-3-oxobutyl phosphate. Histidine 89 serves as the catalytic Proton donor. Position 114 (leucine 114) interacts with 5-amino-6-(D-ribitylamino)uracil. Residue arginine 128 participates in (2S)-2-hydroxy-3-oxobutyl phosphate binding.

Belongs to the DMRL synthase family. Forms an icosahedral capsid composed of 60 subunits, arranged as a dodecamer of pentamers.

It catalyses the reaction (2S)-2-hydroxy-3-oxobutyl phosphate + 5-amino-6-(D-ribitylamino)uracil = 6,7-dimethyl-8-(1-D-ribityl)lumazine + phosphate + 2 H2O + H(+). Its pathway is cofactor biosynthesis; riboflavin biosynthesis; riboflavin from 2-hydroxy-3-oxobutyl phosphate and 5-amino-6-(D-ribitylamino)uracil: step 1/2. In terms of biological role, catalyzes the formation of 6,7-dimethyl-8-ribityllumazine by condensation of 5-amino-6-(D-ribitylamino)uracil with 3,4-dihydroxy-2-butanone 4-phosphate. This is the penultimate step in the biosynthesis of riboflavin. In Buchnera aphidicola subsp. Acyrthosiphon pisum (strain APS) (Acyrthosiphon pisum symbiotic bacterium), this protein is 6,7-dimethyl-8-ribityllumazine synthase.